The sequence spans 110 residues: Large ribosomal subunit protein uL22 (110 aa).

It belongs to the universal ribosomal protein uL22 family. In terms of assembly, part of the 50S ribosomal subunit.

Its function is as follows. This protein binds specifically to 23S rRNA; its binding is stimulated by other ribosomal proteins, e.g. L4, L17, and L20. It is important during the early stages of 50S assembly. It makes multiple contacts with different domains of the 23S rRNA in the assembled 50S subunit and ribosome. In terms of biological role, the globular domain of the protein is located near the polypeptide exit tunnel on the outside of the subunit, while an extended beta-hairpin is found that lines the wall of the exit tunnel in the center of the 70S ribosome. This Pseudomonas savastanoi pv. phaseolicola (strain 1448A / Race 6) (Pseudomonas syringae pv. phaseolicola (strain 1448A / Race 6)) protein is Large ribosomal subunit protein uL22.